A 473-amino-acid polypeptide reads, in one-letter code: Reticulon-4 receptor (473 aa).

The first 26 residues, 1–26 (MKRASSGGSRLLAWVLWLQAWRVATP), serve as a signal peptide directing secretion. Disulfide bonds link C27-C33 and C31-C43. The 31-residue stretch at 27 to 57 (CPGACVCYNEPKVTTSCPQQGLQAVPTGIPA) folds into the LRRNT domain. 9 LRR repeats span residues 56 to 79 (PASS…SFQS), 80 to 103 (CRNL…AFTG), 105 to 128 (TLLE…TFRG), 129 to 152 (LGHL…LFRG), 153 to 176 (LAAL…TFRD), 178 to 200 (GNLT…AFRG), 202 to 224 (HSLD…AFRD), 225 to 248 (LGRL…VLVP), and 250 to 273 (RSLQ…PLWA). N-linked (GlcNAc...) asparagine glycosylation occurs at N82. Residues 260 to 310 (NPWVCDCRARPLWAWLQKFRGSSSEVPCNLPQRLAGRDLKRLAASDLEGCA) form the LRRCT domain. 3 disulfide bridges follow: C264–C287, C266–C335, and C309–C336. Residues 346-446 (VLEPGRPASA…GSSGTGDAEG (101 aa)) form a disordered region. The N-linked (GlcNAc...) asparagine glycan is linked to N372. Over residues 413–429 (PRRRPGCSRKNRTRSHC) the composition is skewed to basic residues. Positions 434–445 (AGSGSSGTGDAE) are enriched in gly residues. Residue S447 is the site of GPI-anchor amidated serine attachment. The propeptide at 448 to 473 (GALPALACSLAPLGLALVLWTVLGPC) is removed in mature form.

It belongs to the Nogo receptor family. In terms of assembly, homodimer. Interacts with MAG. Interacts with RTN4 and OMG. Interacts with LINGO1 and NGFR. Interacts with KIAA0319L. Interacts with OLFM1; this inhibits interaction with LINGO1 and NGFR. Post-translationally, N-glycosylated. O-glycosylated. Contains terminal sialic acid groups on its glycan chains. Detected in embryonic cerebellum, in spinal cord motor neurons and in dorsal root ganglia. Detected in adult brain, in neocortex, hippocampus, striatum, thalamus and dorsal root ganglion neurons (at protein level).

It is found in the cell membrane. The protein resides in the membrane raft. It localises to the cell projection. The protein localises to the dendrite. Its subcellular location is the perikaryon. It is found in the axon. Receptor for RTN4, OMG and MAG. Functions as a receptor for the sialylated gangliosides GT1b and GM1. Besides, functions as a receptor for chondroitin sulfate proteoglycans. Can also bind heparin. Intracellular signaling cascades are triggered via the coreceptor NGFR. Signaling mediates activation of Rho and downstream reorganization of the actin cytoskeleton. Mediates axonal growth inhibition. May play a role in regulating axon regeneration and neuronal plasticity in the adult central nervous system. Plays a role in postnatal brain development. Required for normal axon migration across the brain midline and normal formation of the corpus callosum. Protects motoneurons against apoptosis; protection against apoptosis is probably mediated via interaction with MAG. Acts in conjunction with RTN4 and LINGO1 in regulating neuronal precursor cell motility during cortical development. Like other family members, plays a role in restricting the number dendritic spines and the number of synapses that are formed during brain development. This is Reticulon-4 receptor (Rtn4r) from Rattus norvegicus (Rat).